The following is a 761-amino-acid chain: Nitrogen fixation protein FixI (761 aa).

Residues 1–120 (MSCCTMDAES…SAPESDKTRN (120 aa)) are Cytoplasmic-facing. The HMA domain occupies 36–106 (RQLDLSVSDV…EINSAGYRAH (71 aa)). A metal cation contacts are provided by C47 and C50. The chain crosses the membrane as a helical span at residues 121-142 (QLLLAIGVSGFAAPNIMLLSVS). The Extracellular portion of the chain corresponds to 143-155 (VWSGADAATRDMF). The chain crosses the membrane as a helical span at residues 156–177 (HWISAMIAAPALVYAGRFFFKS). Residues 178 to 184 (AWNALRH) are Cytoplasmic-facing. The helical transmembrane segment at 185-205 (GRTNMDVPISVTVSLSYAVSL) threads the bilayer. At 206–217 (WETVHHGEHAWF) the chain is on the extracellular side. The helical transmembrane segment at 218–238 (DASVSLLFFLLIGRTLDHIMR) threads the bilayer. The Cytoplasmic portion of the chain corresponds to 239–367 (EKARAAINGL…RARYRRIADR (129 aa)). The helical transmembrane segment at 368-390 (AATLYSPVVHLLALVSFLAWGFL) threads the bilayer. The Extracellular segment spans residues 391–395 (GGDWK). Residues 396 to 415 (QAMLVAVAVLIITCPCALGL) traverse the membrane as a helical segment. The Cytoplasmic portion of the chain corresponds to 416-691 (AVPVVQVVAA…AVARRSASLI (276 aa)). D453 serves as the catalytic 4-aspartylphosphate intermediate. D637 and D641 together coordinate Mg(2+). The chain crosses the membrane as a helical span at residues 692 to 711 (RQNFALAIGYNVLAVPIAIA). At 712–716 (GLATP) the chain is on the extracellular side. The chain crosses the membrane as a helical span at residues 717-735 (LIAAVAMSTSSIIVVTNAL). The Cytoplasmic portion of the chain corresponds to 736 to 761 (RLNGFGKRPDMHIRRGIGRSAEVKAA).

Belongs to the cation transport ATPase (P-type) (TC 3.A.3) family. Type IB subfamily.

The protein resides in the cell membrane. The catalysed reaction is ATP + H2O = ADP + phosphate + H(+). Functionally, fixI is a pump of a specific cation involved in symbiotic nitrogen fixation. The four proteins FixG, FixH, FixI, and FixS may participate in a membrane-bound complex coupling the FixI cation pump with a redox process catalyzed by FixG. The polypeptide is Nitrogen fixation protein FixI (fixI) (Rhizobium leguminosarum bv. viciae).